The sequence spans 387 residues: 1-deoxy-D-xylulose 5-phosphate reductoisomerase (387 aa).

NADPH is bound by residues T10, G11, S12, I13, and N124. K125 provides a ligand contact to 1-deoxy-D-xylulose 5-phosphate. Residue E126 participates in NADPH binding. Mn(2+) is bound at residue D150. Residues S151, E152, S176, and H199 each contribute to the 1-deoxy-D-xylulose 5-phosphate site. E152 contributes to the Mn(2+) binding site. G205 is an NADPH binding site. 1-deoxy-D-xylulose 5-phosphate is bound by residues S212, N217, K218, and E221. E221 provides a ligand contact to Mn(2+).

Belongs to the DXR family. Mg(2+) serves as cofactor. It depends on Mn(2+) as a cofactor.

It carries out the reaction 2-C-methyl-D-erythritol 4-phosphate + NADP(+) = 1-deoxy-D-xylulose 5-phosphate + NADPH + H(+). It participates in isoprenoid biosynthesis; isopentenyl diphosphate biosynthesis via DXP pathway; isopentenyl diphosphate from 1-deoxy-D-xylulose 5-phosphate: step 1/6. Its function is as follows. Catalyzes the NADPH-dependent rearrangement and reduction of 1-deoxy-D-xylulose-5-phosphate (DXP) to 2-C-methyl-D-erythritol 4-phosphate (MEP). This Clostridium beijerinckii (strain ATCC 51743 / NCIMB 8052) (Clostridium acetobutylicum) protein is 1-deoxy-D-xylulose 5-phosphate reductoisomerase.